A 54-amino-acid chain; its full sequence is uncharacterized protein (54 aa).

Residues 34 to 54 form a disordered region; the sequence is NNREKQKSGKLRELRRGFKTF.

This is an uncharacterized protein from Acidianus two-tailed virus (ATV).